The chain runs to 2513 residues: Highly reducing polyketide synthase ACRTS2 (2513 aa).

Residues 4-429 (DTPVAIIGVS…GSSSAVIIDR (426 aa)) enclose the Ketosynthase family 3 (KS3) domain. Active-site for beta-ketoacyl synthase activity residues include C174, H313, and H353. The segment at 547–875 (VFTGQGAQYA…NYLPSLLRGT (329 aa)) is malonyl-CoA:ACP transacylase (MAT) domain. The For malonyltransferase activity role is filled by S635. Residues 942–1074 (HALIGRKAPS…GKIEPEIADL (133 aa)) form an N-terminal hotdog fold region. The dehydratase (DH) domain stretch occupies residues 942–1253 (HALIGRKAPS…TFRTVSSADD (312 aa)). One can recognise a PKS/mFAS DH domain in the interval 942–1254 (HALIGRKAPS…FRTVSSADDQ (313 aa)). Catalysis depends on H974, which acts as the Proton acceptor; for dehydratase activity. Residues 1092–1254 (AGVIEHDMDN…FRTVSSADDQ (163 aa)) form a C-terminal hotdog fold region. The Proton donor; for dehydratase activity role is filled by D1161. Positions 1407–1600 (SKIIGYLTEN…IPTNYRTDNP (194 aa)) are methyltransferase (CMet) domain. The tract at residues 1816–2127 (GSPDTIYFRR…SRDHIGRLVV (312 aa)) is enoylreductase (ER) domain. The ketoreductase (KR) domain stretch occupies residues 2152–2327 (ATYLVAGGTR…YTVSIGLPVV (176 aa)). The Carrier domain maps to 2433 to 2510 (DPLTGLIEAL…ALAVNILAQR (78 aa)). S2470 carries the O-(pantetheine 4'-phosphoryl)serine modification.

It participates in mycotoxin biosynthesis. Highly reducing polyketide synthase; part of the gene cluster that mediates the biosynthesis of the host-selective toxins (HSTs) ACR-toxins responsible for brown spot of rough lemon disease by the rough lemon pathotype. ACR-toxins cause uncoupling of mitochondrial oxidative-phosphorylation similar to that of classic protonophore. The structure of the major form of ACR-toxin (ACR-toxin I) consists of an alpha-dihydropyrone ring in a 19-carbon polyalcohol, a typical polyketide structure. Minor toxins were characterized as having a pyrone ring with polyalcohol side chains different in length and showing weaker toxicity. The highly reducing polyketide synthase ACRTS2 has all necessary enzymatic domains for multiple cycles of condensation and beta-keto processing. The cytochrome P450 monooxygenase ACRTS1 has also been shown to be essential for ACR-toxin biosynthesis, however its exact role in the pathway has not been elucidated yet. The polypeptide is Highly reducing polyketide synthase ACRTS2 (Alternaria alternata (Alternaria rot fungus)).